The primary structure comprises 116 residues: Large ribosomal subunit protein bL19 (116 aa).

The protein belongs to the bacterial ribosomal protein bL19 family.

In terms of biological role, this protein is located at the 30S-50S ribosomal subunit interface and may play a role in the structure and function of the aminoacyl-tRNA binding site. This is Large ribosomal subunit protein bL19 from Streptomyces griseus subsp. griseus (strain JCM 4626 / CBS 651.72 / NBRC 13350 / KCC S-0626 / ISP 5235).